Reading from the N-terminus, the 667-residue chain is MDTIEKKSVATIRTLSIDAIEKANSGHPGMPMGAAPMAYTLWTKFMNVSPANPGWFNRDRFVLSAGHGSALLYSMLHLSGFDLSIEDLKGFRQWGSKTPGHPEFGHTAGVDATTGPLGQGIAMAVGMAIAERHLAETYNRDSFNVVDHYTYSICGDGDLMEGISSEAASLAGHLQLGRLIVLYDSNDISLDGDLDRSFSENVKQRFEAMNWEVLYVEDGNNIEELTAAIEKARQNEKKPTLIEVKTTIGFGSPNRAGTSGVHGAPLGKEESKLTKEAYAWTYEEDFYVPSEVYEHFAVAVKESGEKKEQEWNAQFAKYKEVYPELAEQLELAIKGELPKDWDQEVPVYEKGSSLASRASSGEVLNGLAKKIPFFVGGSADLAGSNKTTIKNAGDFTAVDYSGKNFWFGVREFAMGAALNGMALHGGLRVFGGTFFVFSDYLRPAIRLAALMGLPVTYVFTHDSIAVGEDGPTHEPVEQLASLRAMPNLSLIRPADGNETAAAWKLAVQSTDHPTALVLTRQNLPTIDQTSEEALAGVEKGAYVVSKSKNETPDALLIASGSEVGLAIEAQAELAKENIDVSVVSMPSMDRFEKQSDEYKNEVLPADVKKRLAIEMGSSFGWGKYTGLEGDVLGIDRFGASAPGETIINEYGFSVPNVVNRVKALINK.

A substrate-binding site is contributed by His27. Thiamine diphosphate-binding positions include His67 and 115–117 (GPL). Asp156 contacts Mg(2+). 2 residues coordinate thiamine diphosphate: Gly157 and Asn186. 2 residues coordinate Mg(2+): Asn186 and Ile188. 3 residues coordinate substrate: His262, Arg357, and Ser384. His262 contributes to the thiamine diphosphate binding site. The Proton donor role is filled by Glu411. Phe437 serves as a coordination point for thiamine diphosphate. His461, Asp469, and Arg520 together coordinate substrate.

The protein belongs to the transketolase family. In terms of assembly, homodimer. Mg(2+) is required as a cofactor. Ca(2+) serves as cofactor. Requires Mn(2+) as cofactor. The cofactor is Co(2+). It depends on thiamine diphosphate as a cofactor.

It catalyses the reaction D-sedoheptulose 7-phosphate + D-glyceraldehyde 3-phosphate = aldehydo-D-ribose 5-phosphate + D-xylulose 5-phosphate. In terms of biological role, catalyzes the transfer of a two-carbon ketol group from a ketose donor to an aldose acceptor, via a covalent intermediate with the cofactor thiamine pyrophosphate. In Bacillus subtilis (strain 168), this protein is Transketolase (tkt).